Consider the following 329-residue polypeptide: Capsular polysaccharide phosphotransferase WcwK (329 aa).

The protein belongs to the stealth family.

The chain is Capsular polysaccharide phosphotransferase WcwK (wcwK) from Streptococcus pneumoniae.